A 430-amino-acid chain; its full sequence is Cytochrome c biogenesis protein CcsB (430 aa).

The next 3 membrane-spanning stretches (helical) occupy residues 14 to 34, 72 to 92, and 162 to 182; these read LRLA…GTIL, SVWF…CSWR, and VGPL…AWGA.

This sequence belongs to the Ccs1/CcsB family. May interact with CcsA.

It localises to the cellular thylakoid membrane. Its function is as follows. Required during biogenesis of c-type cytochromes (cytochrome c6 and cytochrome f) at the step of heme attachment. The polypeptide is Cytochrome c biogenesis protein CcsB (Synechococcus sp. (strain WH7803)).